The chain runs to 1492 residues: DNA-directed RNA polymerase subunit beta' (1492 aa).

The Zn(2+) site is built by Cys-67, Cys-69, Cys-82, and Cys-85. Asp-499, Asp-501, and Asp-503 together coordinate Mg(2+). Residues Cys-867, Cys-943, Cys-950, and Cys-953 each coordinate Zn(2+).

Belongs to the RNA polymerase beta' chain family. As to quaternary structure, the RNAP catalytic core consists of 2 alpha, 1 beta, 1 beta' and 1 omega subunit. When a sigma factor is associated with the core the holoenzyme is formed, which can initiate transcription. Mg(2+) is required as a cofactor. Zn(2+) serves as cofactor.

It carries out the reaction RNA(n) + a ribonucleoside 5'-triphosphate = RNA(n+1) + diphosphate. DNA-dependent RNA polymerase catalyzes the transcription of DNA into RNA using the four ribonucleoside triphosphates as substrates. This is DNA-directed RNA polymerase subunit beta' from Chlorobium phaeobacteroides (strain DSM 266 / SMG 266 / 2430).